Consider the following 139-residue polypeptide: Actin-depolymerizing factor 3 (139 aa).

The region spanning 5–139 is the ADF-H domain; the sequence is ASGMAVHDDC…DLDVFKSRAN (135 aa). S6 is modified (phosphoserine).

This sequence belongs to the actin-binding proteins ADF family.

The protein resides in the cytoplasm. Its subcellular location is the cytoskeleton. In terms of biological role, actin-depolymerizing protein. Severs actin filaments (F-actin) and binds to actin monomers. This is Actin-depolymerizing factor 3 (ADF3) from Arabidopsis thaliana (Mouse-ear cress).